A 271-amino-acid chain; its full sequence is Octanoyltransferase LipM (271 aa).

The BPL/LPL catalytic domain occupies 31–242 (GHNKPTLRFY…GLAEQFNVEF (212 aa)). Cysteine 144 (acyl-thioester intermediate) is an active-site residue.

This sequence belongs to the octanoyltransferase LipM family. Monomer.

It carries out the reaction octanoyl-[ACP] + L-lysyl-[protein] = N(6)-octanoyl-L-lysyl-[protein] + holo-[ACP] + H(+). The protein operates within protein modification; protein lipoylation via endogenous pathway; protein N(6)-(lipoyl)lysine from octanoyl-[acyl-carrier-protein]. In terms of biological role, catalyzes the transfer of endogenously produced octanoic acid from octanoyl-acyl-carrier-protein onto the lipoyl domain of GcvH, an intermediate carrier during protein lipoylation. This Clostridioides difficile (strain 630) (Peptoclostridium difficile) protein is Octanoyltransferase LipM.